We begin with the raw amino-acid sequence, 75 residues long: Kappa-conotoxin RIIIK (75 aa).

Residues 1-19 (MSKLGVLLTICLLLFPLTA) form the signal peptide. Positions 20–50 (LPMDGDQPVDRLAERMQDNISSEQHTFFEKR) are excised as a propeptide. Pro-52, Pro-63, Pro-65, and Pro-71 each carry 4-hydroxyproline. 3 disulfide bridges follow: Cys-54–Cys-67, Cys-55–Cys-72, and Cys-62–Cys-73. Thr-74 is subject to Threonine amide.

Belongs to the conotoxin M superfamily. As to expression, expressed by the venom duct.

The protein resides in the secreted. Kappa-conotoxins inhibits voltage-gated potassium channels (Kv). This synthetic toxin reversibly inhibits the insect potassium channel Shaker K+, the teleost homolog TSha1 and the mammalian Kv1.2/KCNA2 channel. Interacts with the pore region of the insect channel, in a state-dependent manner. Causes seizure when intracerebrovascularly injected into mice. Is also toxic when intrathecally injected into mice, but shows no visible effects by intraperitoneal injection. Shows protective effects on cardiac tissue when administered after an ischemic event. In Conus radiatus (Rayed cone), this protein is Kappa-conotoxin RIIIK.